Reading from the N-terminus, the 180-residue chain is Large ribosomal subunit protein uL6 (180 aa).

Belongs to the universal ribosomal protein uL6 family. As to quaternary structure, part of the 50S ribosomal subunit.

Its function is as follows. This protein binds to the 23S rRNA, and is important in its secondary structure. It is located near the subunit interface in the base of the L7/L12 stalk, and near the tRNA binding site of the peptidyltransferase center. The sequence is that of Large ribosomal subunit protein uL6 from Clostridium beijerinckii (strain ATCC 51743 / NCIMB 8052) (Clostridium acetobutylicum).